Consider the following 207-residue polypeptide: MKRDPTKGRKTPDHYARKAKTEHYPARSVYKLQEIQKKHNVLKPGNAVLDLGCFPGSWMMFAAETVGRGGKVTGIDLKKVATHMPAQATSLQEDIYEIDREALAGTLGPLDVVLSDMAPDTMGNKFTDAARSFHLAAAALDLALFLLKPGGHFVCKVFQGEDFQNFVNMVKAEFERHKVFKPETCRKDSKETYVIGFSKKESTHVGS.

A disordered region spans residues Met1–Lys20. Gly56, Trp58, Asp76, Asp94, and Asp116 together coordinate S-adenosyl-L-methionine. Lys156 (proton acceptor) is an active-site residue.

This sequence belongs to the class I-like SAM-binding methyltransferase superfamily. RNA methyltransferase RlmE family.

The protein resides in the cytoplasm. The catalysed reaction is uridine(2552) in 23S rRNA + S-adenosyl-L-methionine = 2'-O-methyluridine(2552) in 23S rRNA + S-adenosyl-L-homocysteine + H(+). Functionally, specifically methylates the uridine in position 2552 of 23S rRNA at the 2'-O position of the ribose in the fully assembled 50S ribosomal subunit. This is Ribosomal RNA large subunit methyltransferase E from Desulfosudis oleivorans (strain DSM 6200 / JCM 39069 / Hxd3) (Desulfococcus oleovorans).